Reading from the N-terminus, the 547-residue chain is Cilia- and flagella- associated protein 210 (547 aa).

A coiled-coil region spans residues 184 to 254 (KLNVEKAFKE…EIEMKKKQGK (71 aa)). The disordered stretch occupies residues 210–237 (KDHLKQIKEHEEEEERRRKEEEKDAEEI).

As to quaternary structure, microtubule inner protein component of sperm flagellar doublet microtubules. Expressed in trachea multiciliated cells.

The protein localises to the cytoplasm. It is found in the cytoskeleton. The protein resides in the cilium axoneme. Its subcellular location is the flagellum axoneme. Its function is as follows. Microtubule inner protein (MIP) part of the dynein-decorated doublet microtubules (DMTs) in cilia axoneme, which is required for motile cilia beating. The protein is Cilia- and flagella- associated protein 210 (CFAP210) of Bos taurus (Bovine).